A 211-amino-acid polypeptide reads, in one-letter code: Protein N-terminal glutamine amidohydrolase (211 aa).

Residues cysteine 24, histidine 78, and aspartate 94 contribute to the active site.

The protein belongs to the NTAQ1 family. In terms of assembly, monomer.

The catalysed reaction is N-terminal L-glutaminyl-[protein] + H2O = N-terminal L-glutamyl-[protein] + NH4(+). Functionally, mediates the side-chain deamidation of N-terminal glutamine residues to glutamate, an important step in N-end rule pathway of protein degradation. Conversion of the resulting N-terminal glutamine to glutamate renders the protein susceptible to arginylation, polyubiquitination and degradation as specified by the N-end rule. Does not act on substrates with internal or C-terminal glutamine and does not act on non-glutamine residues in any position. In Anopheles gambiae (African malaria mosquito), this protein is Protein N-terminal glutamine amidohydrolase (tun).